Here is a 1246-residue protein sequence, read N- to C-terminus: MPHPVQLGKKVRMSYSQINEVLDMPNLIELQKEAYDWFLDEGLREVFNDISPIQDYTGNLILEFVDYSLDENPKYDVGESKERDATYAAPLKVKVRLINKETGEVKEQEVFMGDFPLMTDTGTFIINGAERVIVSQLVRSPGVYYNRQFDKTGKQLYSATVIPNRGAWLEYETDSNDVVSVRVDRTRKQPATVLLRALGYGTDQQIKDLLGEDERILATLEKDNTKTAEEGLLEIYKKLRPGEPPTIESATSLINTLFFDAKRYDLAKVGRYKFSKKLSLANRIMSHKAAENVSDPQTGEILVEEGTKIDREISLLIQNSGINEVHVYSEENKKIKVIGNHFVDIKTHIDFDIQDLKLRERVYYPVLREILDTFDSEAEIKEALKERKRELIPKHILKSDIVASINYAFNLAHEIGNVDDIDHLGNRRLRSVGELLQNQFRIGLSRMERVVKERMTIQDVDLVTPQALINIRPVAASIKEFFGSSQLSQFMDQTNPLAELTHKRRLSALGPGGLSRERAGFEVRDVHHSHYGRMCPIETPEGPNIGLINSLSSYARINEYGFIESPYRKVDKKRDVVTTDIEYLTADEEDLFIIAQANEPLDEEGKFGNKRVTSRTKFGGIDVVPFDEVDYMDVSPKQVVSVATAMIPFLENDDANRALMGSNMQRQAVPLLITDAPIIGTGMEYKAAKDSGVVVVARNSGIVDYVASNEIVVKLEDGQKDRYKLLKFKRSNQGTCINQKPIVSKGERIEAGDVIADGPSTDRGEIALGRNCLVGFMAWEGYNFEDAILINEKLVKEDALTTIHIEEYESEARDTKLGPEEITRDIPNVGEDSLKDLDERGVIRIGAEVESGDILVGKVTPKGETELTAEERLLRAIFGEKAREVRDTSLKVPHGENGIIVDIKVFTRENGDELPPGVNELVRVYIAKKKKINVGDKMAGRHGNKGVISRILPQEDMPFLEDGTPLEIVLNPLGVPSRMNIGQILEVHLGLAAKALGWKVATPVFDGANEFDIMDALEESGYPRGGKLKLQDGRTGEAFDNPVTVGYMYMLKLHHLVDDKIHARSTGPYSLVTQQPLGGKAQFGGQRFGEMEVWALEAYGAAHTLQEILTVKSDDVVGRVKTYECIVKGENIPEPGVPESFKVLIKELQSLCLDVKVLTDDDHELEIKETIDDDAGEMSLEHGDFDYGLEEPTVPEGSHITDEEEKDEDNDSEEALITEEDFEPTSVETEYAEDDDEFDGYNDFKA.

The tract at residues 1171 to 1246 is disordered; it reads IDDDAGEMSL…EFDGYNDFKA (76 aa). 2 stretches are compositionally biased toward acidic residues: residues 1202-1223 and 1230-1240; these read DEEEKDEDNDSEEALITEEDFE and EYAEDDDEFDG.

This sequence belongs to the RNA polymerase beta chain family. As to quaternary structure, the RNAP catalytic core consists of 2 alpha, 1 beta, 1 beta' and 1 omega subunit. When a sigma factor is associated with the core the holoenzyme is formed, which can initiate transcription.

The enzyme catalyses RNA(n) + a ribonucleoside 5'-triphosphate = RNA(n+1) + diphosphate. In terms of biological role, DNA-dependent RNA polymerase catalyzes the transcription of DNA into RNA using the four ribonucleoside triphosphates as substrates. In Alkaliphilus metalliredigens (strain QYMF), this protein is DNA-directed RNA polymerase subunit beta.